Reading from the N-terminus, the 107-residue chain is Small ribosomal subunit protein bS16 (107 aa).

The disordered stretch occupies residues 85 to 107 (REARNNPEKAVPRKERKAAEAGK).

Belongs to the bacterial ribosomal protein bS16 family.

This Rhodopseudomonas palustris (strain BisB5) protein is Small ribosomal subunit protein bS16.